Consider the following 395-residue polypeptide: S-adenosylmethionine synthase (395 aa).

Residue H19 coordinates ATP. Mg(2+) is bound at residue D21. A K(+)-binding site is contributed by E47. L-methionine-binding residues include E60 and Q103. The interval 103-113 (QSPDIAQGVNS) is flexible loop. ATP-binding positions include 170–172 (DNK), 236–237 (KF), D245, 251–252 (RK), A268, and K272. Residue D245 participates in L-methionine binding. L-methionine is bound at residue K276.

It belongs to the AdoMet synthase family. As to quaternary structure, homotetramer; dimer of dimers. Mg(2+) is required as a cofactor. K(+) serves as cofactor.

Its subcellular location is the cytoplasm. It carries out the reaction L-methionine + ATP + H2O = S-adenosyl-L-methionine + phosphate + diphosphate. The protein operates within amino-acid biosynthesis; S-adenosyl-L-methionine biosynthesis; S-adenosyl-L-methionine from L-methionine: step 1/1. Functionally, catalyzes the formation of S-adenosylmethionine (AdoMet) from methionine and ATP. The overall synthetic reaction is composed of two sequential steps, AdoMet formation and the subsequent tripolyphosphate hydrolysis which occurs prior to release of AdoMet from the enzyme. The sequence is that of S-adenosylmethionine synthase from Rhodopirellula baltica (strain DSM 10527 / NCIMB 13988 / SH1).